A 217-amino-acid polypeptide reads, in one-letter code: Somatotropin (217 aa).

The N-terminal stretch at 1–26 (MAAGSRTSLLLAFALLCLPWLQEGSA) is a signal peptide. Histidine 44 contributes to the Zn(2+) binding site. The cysteines at positions 79 and 191 are disulfide-linked. At serine 132 the chain carries Phosphoserine. Glutamate 200 contributes to the Zn(2+) binding site. An intrachain disulfide couples cysteine 208 to cysteine 215.

The protein belongs to the somatotropin/prolactin family.

It is found in the secreted. Its function is as follows. Plays an important role in growth control. Its major role in stimulating body growth is to stimulate the liver and other tissues to secrete IGF1. It stimulates both the differentiation and proliferation of myoblasts. It also stimulates amino acid uptake and protein synthesis in muscle and other tissues. The sequence is that of Somatotropin (GH1) from Macaca mulatta (Rhesus macaque).